The sequence spans 137 residues: Peptide methionine sulfoxide reductase MsrB (137 aa).

The MsrB domain occupies 7 to 129 (AEELKKKLSE…NSASLAFSDE (123 aa)). The Zn(2+) site is built by Cys46, Cys49, Cys95, and Cys98. The active-site Nucleophile is Cys118.

The protein belongs to the MsrB Met sulfoxide reductase family. The cofactor is Zn(2+).

It catalyses the reaction L-methionyl-[protein] + [thioredoxin]-disulfide + H2O = L-methionyl-(R)-S-oxide-[protein] + [thioredoxin]-dithiol. The polypeptide is Peptide methionine sulfoxide reductase MsrB (Salmonella agona (strain SL483)).